The sequence spans 417 residues: Imidazolonepropionase (417 aa).

2 residues coordinate Fe(3+): His-77 and His-79. Zn(2+)-binding residues include His-77 and His-79. Residues Arg-86, Tyr-149, and His-182 each coordinate 4-imidazolone-5-propanoate. Position 149 (Tyr-149) interacts with N-formimidoyl-L-glutamate. His-247 provides a ligand contact to Fe(3+). His-247 serves as a coordination point for Zn(2+). Gln-250 is a 4-imidazolone-5-propanoate binding site. Residue Asp-322 coordinates Fe(3+). Asp-322 is a binding site for Zn(2+). Positions 324 and 326 each coordinate N-formimidoyl-L-glutamate. Thr-327 contacts 4-imidazolone-5-propanoate.

Belongs to the metallo-dependent hydrolases superfamily. HutI family. Zn(2+) is required as a cofactor. Requires Fe(3+) as cofactor.

The protein localises to the cytoplasm. It carries out the reaction 4-imidazolone-5-propanoate + H2O = N-formimidoyl-L-glutamate. It functions in the pathway amino-acid degradation; L-histidine degradation into L-glutamate; N-formimidoyl-L-glutamate from L-histidine: step 3/3. Catalyzes the hydrolytic cleavage of the carbon-nitrogen bond in imidazolone-5-propanoate to yield N-formimidoyl-L-glutamate. It is the third step in the universal histidine degradation pathway. This Cupriavidus necator (strain ATCC 17699 / DSM 428 / KCTC 22496 / NCIMB 10442 / H16 / Stanier 337) (Ralstonia eutropha) protein is Imidazolonepropionase.